We begin with the raw amino-acid sequence, 186 residues long: NADH dehydrogenase [ubiquinone] 1 beta subcomplex subunit 8, mitochondrial (186 aa).

A mitochondrion-targeting transit peptide spans 1 to 28 (MAAARAGVLGVRWLQKAARNVVPLGART). Residues 133 to 153 (LFGFVAFMLFMFWVGETYPAY) form a helical membrane-spanning segment.

It belongs to the complex I NDUFB8 subunit family. As to quaternary structure, complex I is composed of 45 different subunits.

The protein localises to the mitochondrion inner membrane. Its function is as follows. Accessory subunit of the mitochondrial membrane respiratory chain NADH dehydrogenase (Complex I), that is believed not to be involved in catalysis. Complex I functions in the transfer of electrons from NADH to the respiratory chain. The immediate electron acceptor for the enzyme is believed to be ubiquinone. This chain is NADH dehydrogenase [ubiquinone] 1 beta subcomplex subunit 8, mitochondrial (NDUFB8), found in Bos taurus (Bovine).